The chain runs to 375 residues: Solute carrier family 35 member F2 (375 aa).

Residue Met1 is modified to N-acetylmethionine. Residues Ser5, Ser22, Ser25, and Ser28 each carry the phosphoserine modification. Transmembrane regions (helical) follow at residues Ile39 to Thr59, Met73 to Phe93, Trp108 to Val126, Ser136 to Leu156, Phe165 to Ala185, Val195 to Cys215, Glu227 to Val247, Leu263 to Ile283, Ser290 to Phe310, and Phe314 to Ser334. Ser372 is modified (phosphoserine).

Belongs to the SLC35F solute transporter family.

The protein resides in the membrane. Functionally, putative solute transporter. This chain is Solute carrier family 35 member F2 (Slc35f2), found in Mus musculus (Mouse).